Consider the following 723-residue polypeptide: Catalase-peroxidase (723 aa).

Residues 97-225 constitute a cross-link (tryptophyl-tyrosyl-methioninium (Trp-Tyr) (with M-251)); it reads WHAAGSYRVT…LAAVQMGLIY (129 aa). The Proton acceptor role is filled by H98. Positions 225 to 251 form a cross-link, tryptophyl-tyrosyl-methioninium (Tyr-Met) (with W-97); the sequence is YVNPEGVNGKSDPLATAAQMRETFARM. H266 provides a ligand contact to heme b.

This sequence belongs to the peroxidase family. Peroxidase/catalase subfamily. As to quaternary structure, homodimer or homotetramer. Heme b serves as cofactor. In terms of processing, formation of the three residue Trp-Tyr-Met cross-link is important for the catalase, but not the peroxidase activity of the enzyme.

The catalysed reaction is H2O2 + AH2 = A + 2 H2O. It catalyses the reaction 2 H2O2 = O2 + 2 H2O. Its function is as follows. Bifunctional enzyme with both catalase and broad-spectrum peroxidase activity. This Agrobacterium fabrum (strain C58 / ATCC 33970) (Agrobacterium tumefaciens (strain C58)) protein is Catalase-peroxidase.